A 97-amino-acid polypeptide reads, in one-letter code: Exodeoxyribonuclease 7 small subunit (97 aa).

Residues 1–22 (MAKTASPGDTAAGNGTEPLPDK) are disordered.

Belongs to the XseB family. As to quaternary structure, heterooligomer composed of large and small subunits.

The protein resides in the cytoplasm. The catalysed reaction is Exonucleolytic cleavage in either 5'- to 3'- or 3'- to 5'-direction to yield nucleoside 5'-phosphates.. In terms of biological role, bidirectionally degrades single-stranded DNA into large acid-insoluble oligonucleotides, which are then degraded further into small acid-soluble oligonucleotides. The sequence is that of Exodeoxyribonuclease 7 small subunit from Burkholderia vietnamiensis (strain G4 / LMG 22486) (Burkholderia cepacia (strain R1808)).